A 129-amino-acid chain; its full sequence is Small ribosomal subunit protein uS12 (129 aa).

D89 is subject to 3-methylthioaspartic acid.

It belongs to the universal ribosomal protein uS12 family. Part of the 30S ribosomal subunit. Contacts proteins S8 and S17. May interact with IF1 in the 30S initiation complex.

Functionally, with S4 and S5 plays an important role in translational accuracy. In terms of biological role, interacts with and stabilizes bases of the 16S rRNA that are involved in tRNA selection in the A site and with the mRNA backbone. Located at the interface of the 30S and 50S subunits, it traverses the body of the 30S subunit contacting proteins on the other side and probably holding the rRNA structure together. The combined cluster of proteins S8, S12 and S17 appears to hold together the shoulder and platform of the 30S subunit. This Helicobacter hepaticus (strain ATCC 51449 / 3B1) protein is Small ribosomal subunit protein uS12.